The sequence spans 412 residues: MITRQVLILGHWNSRFRAFIHIHSAGQPLFSTMTAAFPIQPVARFAGKSELVKRPKEFACFSYDADHKFLLGAQSLKWYYTPDLNVDLSKGFESFIKHDDSVDEHLDSLLTTIADYEQKTSKPIDAHIVTWRGMMTKIMAAPFDDDDGFEMNATLYRGCIFIEENHAYKQASRANERPWNGPIPQEVMQYWGYKFETLSTLPKPWGQTSRDFIESRPDHVVNNKEQYCSVVRTGIGKTILCIGGEVDAIWDDKPRTQGDPINWVELKTSAVIQNERQANNFERKLMKFWIQSFLLGVPKIIVGFRTQDGLLVETKEFRTMEIPLMVKKNGRPKWDGDTCVNFANGFLEWLRHTITDEGVWRIKRRPRSAEIEVFKVEEVGHGDIITDEFMNWRIKLELRQAQPPTEDNETEE.

Position 196 (Glu-196) interacts with a divalent metal cation. Substrate contacts are provided by Cys-228 and Glu-245. Positions 247, 265, and 266 each coordinate a divalent metal cation. Positions 267 and 291 each coordinate substrate.

It belongs to the DXO/Dom3Z family. In terms of assembly, interacts with exr-1/rat1; the interaction is direct, stabilizes exr-1 protein structure and stimulates its exoribonuclease activity. The interaction also stimulates rai1 pyrophosphohydrolase activity, probably by recruiting it to mRNA substrates. It depends on a divalent metal cation as a cofactor.

The protein localises to the nucleus. The enzyme catalyses a 5'-end NAD(+)-phospho-ribonucleoside in mRNA + H2O = a 5'-end phospho-ribonucleoside in mRNA + NAD(+) + H(+). The catalysed reaction is a 5'-end (N(7)-methyl 5'-triphosphoguanosine)-ribonucleoside-ribonucleotide in mRNA + H2O = a (N(7)-methyl 5'-triphosphoguanosine)-nucleoside + a 5'-end phospho-ribonucleoside in mRNA + H(+). It catalyses the reaction a 5'-end triphospho-ribonucleoside in mRNA + H2O = a 5'-end phospho-ribonucleoside in mRNA + diphosphate + H(+). Functionally, decapping enzyme for NAD-capped RNAs: specifically hydrolyzes the nicotinamide adenine dinucleotide (NAD) cap from a subset of RNAs by removing the entire NAD moiety from the 5'-end of an NAD-capped RNA. The NAD-cap is present at the 5'-end of some RNAs and snoRNAs. In contrast to the canonical 5'-end N7 methylguanosine (m7G) cap, the NAD cap promotes mRNA decay. Also acts as a non-canonical decapping enzyme that removes the entire cap structure of m7G capped or incompletely capped RNAs. Has decapping activity toward incomplete 5'-end m7G cap mRNAs such as unmethylated 5'-end-capped RNA (cap0), while it has no activity toward 2'-O-ribose methylated m7G cap (cap1). Also possesses RNA 5'-pyrophosphohydrolase activity by hydrolyzing the 5'-end triphosphate to release pyrophosphates. Stimulates exoribonuclease activity of Rat1, allowing it to degrade RNAs with stable secondary structure more effectively. The protein is Decapping nuclease RAI1 (rai1) of Neurospora crassa (strain ATCC 24698 / 74-OR23-1A / CBS 708.71 / DSM 1257 / FGSC 987).